The chain runs to 132 residues: Small ribosomal subunit protein uS8 (132 aa).

The protein belongs to the universal ribosomal protein uS8 family. In terms of assembly, part of the 30S ribosomal subunit. Contacts proteins S5 and S12.

One of the primary rRNA binding proteins, it binds directly to 16S rRNA central domain where it helps coordinate assembly of the platform of the 30S subunit. The chain is Small ribosomal subunit protein uS8 from Brucella ovis (strain ATCC 25840 / 63/290 / NCTC 10512).